The sequence spans 78 residues: Large ribosomal subunit protein bL28 (78 aa).

This sequence belongs to the bacterial ribosomal protein bL28 family.

This Corynebacterium aurimucosum (strain ATCC 700975 / DSM 44827 / CIP 107346 / CN-1) (Corynebacterium nigricans) protein is Large ribosomal subunit protein bL28.